Here is a 208-residue protein sequence, read N- to C-terminus: 2-phospho-L-lactate guanylyltransferase (208 aa).

The protein belongs to the CofC family. As to quaternary structure, homodimer.

The enzyme catalyses (2S)-2-phospholactate + GTP + H(+) = (2S)-lactyl-2-diphospho-5'-guanosine + diphosphate. It functions in the pathway cofactor biosynthesis; coenzyme F420 biosynthesis. Functionally, guanylyltransferase that catalyzes the activation of (2S)-2-phospholactate (2-PL) as (2S)-lactyl-2-diphospho-5'-guanosine, via the condensation of 2-PL with GTP. It is involved in the biosynthesis of coenzyme F420, a hydride carrier cofactor. In Methanosarcina barkeri (strain Fusaro / DSM 804), this protein is 2-phospho-L-lactate guanylyltransferase.